The following is a 211-amino-acid chain: Imidazole glycerol phosphate synthase subunit HisH (211 aa).

A Glutamine amidotransferase type-1 domain is found at 4–211 (TVALLDYGSG…QLLRNWINHI (208 aa)). The active-site Nucleophile is the Cys-82. Catalysis depends on residues His-192 and Glu-194.

As to quaternary structure, heterodimer of HisH and HisF.

The protein localises to the cytoplasm. It catalyses the reaction 5-[(5-phospho-1-deoxy-D-ribulos-1-ylimino)methylamino]-1-(5-phospho-beta-D-ribosyl)imidazole-4-carboxamide + L-glutamine = D-erythro-1-(imidazol-4-yl)glycerol 3-phosphate + 5-amino-1-(5-phospho-beta-D-ribosyl)imidazole-4-carboxamide + L-glutamate + H(+). The catalysed reaction is L-glutamine + H2O = L-glutamate + NH4(+). The protein operates within amino-acid biosynthesis; L-histidine biosynthesis; L-histidine from 5-phospho-alpha-D-ribose 1-diphosphate: step 5/9. IGPS catalyzes the conversion of PRFAR and glutamine to IGP, AICAR and glutamate. The HisH subunit catalyzes the hydrolysis of glutamine to glutamate and ammonia as part of the synthesis of IGP and AICAR. The resulting ammonia molecule is channeled to the active site of HisF. The protein is Imidazole glycerol phosphate synthase subunit HisH of Corynebacterium efficiens (strain DSM 44549 / YS-314 / AJ 12310 / JCM 11189 / NBRC 100395).